Here is a 274-residue protein sequence, read N- to C-terminus: 2,3,4,5-tetrahydropyridine-2,6-dicarboxylate N-succinyltransferase (274 aa).

It belongs to the transferase hexapeptide repeat family.

The protein resides in the cytoplasm. The enzyme catalyses (S)-2,3,4,5-tetrahydrodipicolinate + succinyl-CoA + H2O = (S)-2-succinylamino-6-oxoheptanedioate + CoA. The protein operates within amino-acid biosynthesis; L-lysine biosynthesis via DAP pathway; LL-2,6-diaminopimelate from (S)-tetrahydrodipicolinate (succinylase route): step 1/3. The polypeptide is 2,3,4,5-tetrahydropyridine-2,6-dicarboxylate N-succinyltransferase (Salmonella heidelberg (strain SL476)).